The primary structure comprises 434 residues: uncharacterized protein (434 aa).

The next 11 helical transmembrane spans lie at 50 to 70 (GSIA…SFTL), 72 to 92 (TGLL…VLAI), 95 to 115 (LMAF…LLPV), 135 to 155 (SPVV…QFGW), 158 to 178 (SLIA…YFPH), 179 to 199 (LNPE…IAIT), 229 to 249 (LPYI…KIFA), 288 to 308 (GFVP…VAGF), 319 to 339 (PNPM…VLLL), 376 to 396 (IFAA…AIYF), and 412 to 432 (VVAV…GLFV).

Its subcellular location is the cell membrane. This is an uncharacterized protein from Escherichia coli (strain K12).